The primary structure comprises 359 residues: Aflatoxin B1 aldehyde reductase member 2 (359 aa).

The N-terminal 38 residues, 1 to 38, are a transit peptide targeting the mitochondrion; it reads MLSAASRVVSRAAVHCALRSPPPEARALAMSRPPPPRV. Phosphoserine is present on serine 40. An NADP(+)-binding site is contributed by aspartate 72. Tyrosine 77 serves as the catalytic Proton donor. At lysine 128 the chain carries N6-acetyllysine. Residue histidine 141 coordinates substrate. NADP(+) contacts are provided by residues 171–172, glutamine 197, 226–236, and arginine 250; these read SN and NPLAGGLLTGK. Lysine 236 is modified (N6-succinyllysine). At serine 255 the chain carries Phosphoserine. Tyrosine 260 and arginine 263 together coordinate substrate. 318 to 326 is an NADP(+) binding site; sequence SSLEQLEQN. Arginine 359 provides a ligand contact to substrate.

This sequence belongs to the aldo/keto reductase family. Aldo/keto reductase 2 subfamily. Homodimer. In terms of tissue distribution, detected in brain, liver, small intestine and testis, and at lower levels in heart, prostate, skeletal muscle and spleen. Detected in kidney proximal and distal tubules, endothelial cells lining the Bowman's capsules and some cysts. Detected at low levels in lung and pancreas (at protein level). Widely expressed.

The protein resides in the mitochondrion. Its subcellular location is the golgi apparatus. It localises to the cytoplasm. It catalyses the reaction 4-hydroxybutanoate + NADP(+) = succinate semialdehyde + NADPH + H(+). Functionally, catalyzes the NADPH-dependent reduction of succinic semialdehyde to gamma-hydroxybutyrate. May have an important role in producing the neuromodulator gamma-hydroxybutyrate (GHB). Has broad substrate specificity. Has NADPH-dependent aldehyde reductase activity towards 2-carboxybenzaldehyde, 2-nitrobenzaldehyde and pyridine-2-aldehyde (in vitro). Can reduce 1,2-naphthoquinone and 9,10-phenanthrenequinone (in vitro). Can reduce the dialdehyde protein-binding form of aflatoxin B1 (AFB1) to the non-binding AFB1 dialcohol. May be involved in protection of liver against the toxic and carcinogenic effects of AFB1, a potent hepatocarcinogen. This Homo sapiens (Human) protein is Aflatoxin B1 aldehyde reductase member 2 (AKR7A2).